Consider the following 147-residue polypeptide: 3-dehydroquinate dehydratase 1 (147 aa).

Y23 functions as the Proton acceptor in the catalytic mechanism. Substrate contacts are provided by N75, H81, and D88. H101 serves as the catalytic Proton donor. Substrate-binding positions include 102–103 (LS) and R112.

It belongs to the type-II 3-dehydroquinase family. Homododecamer.

It catalyses the reaction 3-dehydroquinate = 3-dehydroshikimate + H2O. Its pathway is metabolic intermediate biosynthesis; chorismate biosynthesis; chorismate from D-erythrose 4-phosphate and phosphoenolpyruvate: step 3/7. Catalyzes a trans-dehydration via an enolate intermediate. The polypeptide is 3-dehydroquinate dehydratase 1 (aroQ1) (Pseudomonas aeruginosa (strain ATCC 15692 / DSM 22644 / CIP 104116 / JCM 14847 / LMG 12228 / 1C / PRS 101 / PAO1)).